Consider the following 519-residue polypeptide: Protein twist (519 aa).

Disordered regions lie at residues 53–77 (MQQQQQQQQHQQQQQQHQQQQQQQY), 131–156 (NFEQQQQQQQQQQQQQTATPAGVATA), 301–321 (YEAYDPANSLNGSTYSSSDRD), and 368–389 (FRKPRRRLKRKPSKTEETDEFS). Low complexity-rich tracts occupy residues 54 to 76 (QQQQQQQQHQQQQQQHQQQQQQQ) and 134 to 146 (QQQQQQQQQQQQQ). The span at 308–317 (NSLNGSTYSS) shows a compositional bias: polar residues. Positions 368-379 (FRKPRRRLKRKP) are enriched in basic residues. Residues 390 to 441 (NQRVMANVRERQRTQSLNDAFKALQQIIPTLPSDKLSKIQTLKLATRYIDFL) enclose the bHLH domain.

Efficient DNA binding requires dimerization with another bHLH protein. Homodimer.

Its subcellular location is the nucleus. Its function is as follows. Involved in the establishment and dorsoventral patterning of germ layers in the embryo. This chain is Protein twist, found in Drosophila virilis (Fruit fly).